Here is a 392-residue protein sequence, read N- to C-terminus: Chorismate synthase (392 aa).

NADP(+) is bound by residues arginine 40 and arginine 46. Residues 135–137 (RAS), 256–257 (QA), glycine 300, 315–319 (KPIST), and arginine 341 contribute to the FMN site.

It belongs to the chorismate synthase family. As to quaternary structure, homotetramer. Requires FMNH2 as cofactor.

The enzyme catalyses 5-O-(1-carboxyvinyl)-3-phosphoshikimate = chorismate + phosphate. It functions in the pathway metabolic intermediate biosynthesis; chorismate biosynthesis; chorismate from D-erythrose 4-phosphate and phosphoenolpyruvate: step 7/7. In terms of biological role, catalyzes the anti-1,4-elimination of the C-3 phosphate and the C-6 proR hydrogen from 5-enolpyruvylshikimate-3-phosphate (EPSP) to yield chorismate, which is the branch point compound that serves as the starting substrate for the three terminal pathways of aromatic amino acid biosynthesis. This reaction introduces a second double bond into the aromatic ring system. The chain is Chorismate synthase from Acidothermus cellulolyticus (strain ATCC 43068 / DSM 8971 / 11B).